Consider the following 640-residue polypeptide: Threonine--tRNA ligase (640 aa).

Residues 224–525 (DHRKLGKELD…LTEHYAGAFP (302 aa)) are catalytic. Cys-323, His-374, and His-502 together coordinate Zn(2+).

It belongs to the class-II aminoacyl-tRNA synthetase family. As to quaternary structure, homodimer. It depends on Zn(2+) as a cofactor.

The protein localises to the cytoplasm. It carries out the reaction tRNA(Thr) + L-threonine + ATP = L-threonyl-tRNA(Thr) + AMP + diphosphate + H(+). Catalyzes the attachment of threonine to tRNA(Thr) in a two-step reaction: L-threonine is first activated by ATP to form Thr-AMP and then transferred to the acceptor end of tRNA(Thr). Also edits incorrectly charged L-seryl-tRNA(Thr). The polypeptide is Threonine--tRNA ligase (Tropheryma whipplei (strain TW08/27) (Whipple's bacillus)).